A 273-amino-acid polypeptide reads, in one-letter code: Dermonecrotic toxin LdSicTox-alphaIB3ai (273 aa).

Histidine 5 is a catalytic residue. The Mg(2+) site is built by glutamate 25 and aspartate 27. Histidine 41 (nucleophile) is an active-site residue. 2 cysteine pairs are disulfide-bonded: cysteine 45/cysteine 51 and cysteine 47/cysteine 190. Aspartate 85 contributes to the Mg(2+) binding site.

Belongs to the arthropod phospholipase D family. Class II subfamily. Mg(2+) is required as a cofactor. As to expression, expressed by the venom gland.

The protein localises to the secreted. It catalyses the reaction an N-(acyl)-sphingosylphosphocholine = an N-(acyl)-sphingosyl-1,3-cyclic phosphate + choline. The catalysed reaction is an N-(acyl)-sphingosylphosphoethanolamine = an N-(acyl)-sphingosyl-1,3-cyclic phosphate + ethanolamine. It carries out the reaction a 1-acyl-sn-glycero-3-phosphocholine = a 1-acyl-sn-glycero-2,3-cyclic phosphate + choline. The enzyme catalyses a 1-acyl-sn-glycero-3-phosphoethanolamine = a 1-acyl-sn-glycero-2,3-cyclic phosphate + ethanolamine. Functionally, dermonecrotic toxins cleave the phosphodiester linkage between the phosphate and headgroup of certain phospholipids (sphingolipid and lysolipid substrates), forming an alcohol (often choline) and a cyclic phosphate. This toxin acts on sphingomyelin (SM). It may also act on ceramide phosphoethanolamine (CPE), lysophosphatidylcholine (LPC) and lysophosphatidylethanolamine (LPE), but not on lysophosphatidylserine (LPS), and lysophosphatidylglycerol (LPG). It acts by transphosphatidylation, releasing exclusively cyclic phosphate products as second products. Induces dermonecrosis, hemolysis, increased vascular permeability, edema, inflammatory response, and platelet aggregation. This chain is Dermonecrotic toxin LdSicTox-alphaIB3ai, found in Loxosceles deserta (Desert recluse spider).